The chain runs to 540 residues: DM7 family protein GM11956 (540 aa).

Residues 416-443 (ATDTRGRDEIRTSCDQPQEKDEGSAEAD) are disordered. Over residues 417 to 443 (TDTRGRDEIRTSCDQPQEKDEGSAEAD) the composition is skewed to basic and acidic residues.

This sequence belongs to the DM7 family.

The chain is DM7 family protein GM11956 from Drosophila sechellia (Fruit fly).